A 90-amino-acid chain; its full sequence is Small ribosomal subunit protein uS15 (90 aa).

The protein belongs to the universal ribosomal protein uS15 family. Part of the 30S ribosomal subunit. Forms a bridge to the 50S subunit in the 70S ribosome, contacting the 23S rRNA.

One of the primary rRNA binding proteins, it binds directly to 16S rRNA where it helps nucleate assembly of the platform of the 30S subunit by binding and bridging several RNA helices of the 16S rRNA. Functionally, forms an intersubunit bridge (bridge B4) with the 23S rRNA of the 50S subunit in the ribosome. The sequence is that of Small ribosomal subunit protein uS15 from Aquifex aeolicus (strain VF5).